Consider the following 345-residue polypeptide: Chorismate synthase (345 aa).

It belongs to the chorismate synthase family. In terms of assembly, homotetramer. FMNH2 serves as cofactor.

It carries out the reaction 5-O-(1-carboxyvinyl)-3-phosphoshikimate = chorismate + phosphate. It functions in the pathway metabolic intermediate biosynthesis; chorismate biosynthesis; chorismate from D-erythrose 4-phosphate and phosphoenolpyruvate: step 7/7. This Carsonella ruddii (strain PV) protein is Chorismate synthase (aroC).